The primary structure comprises 115 residues: MNMFMALSVNIILSTCLILIAFWLPQLNLYNEKANPYECGFDQSSTARLPFSMKFFLVAITFLLFDLEIALLLPLPWAIQMYSINTMMLTAFILVSILALGLAYEWVQKGLEWTE.

The next 3 helical transmembrane spans lie at 4 to 24 (FMAL…AFWL), 55 to 75 (FFLV…LLPL), and 87 to 107 (MMLT…YEWV).

It belongs to the complex I subunit 3 family. In terms of assembly, core subunit of respiratory chain NADH dehydrogenase (Complex I) which is composed of 45 different subunits. Interacts with TMEM186. Interacts with TMEM242.

The protein localises to the mitochondrion inner membrane. The enzyme catalyses a ubiquinone + NADH + 5 H(+)(in) = a ubiquinol + NAD(+) + 4 H(+)(out). Core subunit of the mitochondrial membrane respiratory chain NADH dehydrogenase (Complex I) which catalyzes electron transfer from NADH through the respiratory chain, using ubiquinone as an electron acceptor. Essential for the catalytic activity of complex I. This chain is NADH-ubiquinone oxidoreductase chain 3, found in Osgoodomys banderanus (Michoacan deer mouse).